The following is a 154-amino-acid chain: Ribosomal RNA large subunit methyltransferase H (154 aa).

G103 lines the S-adenosyl-L-methionine pocket.

The protein belongs to the RNA methyltransferase RlmH family. Homodimer.

It localises to the cytoplasm. It catalyses the reaction pseudouridine(1915) in 23S rRNA + S-adenosyl-L-methionine = N(3)-methylpseudouridine(1915) in 23S rRNA + S-adenosyl-L-homocysteine + H(+). Specifically methylates the pseudouridine at position 1915 (m3Psi1915) in 23S rRNA. In Gemmatimonas aurantiaca (strain DSM 14586 / JCM 11422 / NBRC 100505 / T-27), this protein is Ribosomal RNA large subunit methyltransferase H.